The primary structure comprises 365 residues: MNDSVRTTTTISSTKSLVHSFQLSAILHLFLLISFTPMSAAADQHASHATRRGLLRKLGLEHVPVQTGPSIDVPQHMWDIYDDDNDVDWVRHYYPKEIIEDNEGFLLSYNLSLAARNAHNEEVTKATLKLRLRRNNKARRSGNISIYFFEDDINNDRFQIESRSVDNLTEWIDFDVTAAFLRRTNRISFFIDLPEDVEIEETQSSSLSSLPYARAQSAPLIVFSDLSEPSSVRRKRSAQTGNSERKNRKKGRKHHNTEAESNLCRRTDFYVDFDDLNWQDWIMAPKGYDAYQCQGSCPNPMPAQLNATNHAIIQSLLHSLRPDEVPPPCCVPTETSPLSILYMDVDKVIVIREYADMRVESCGCR.

The first 42 residues, 1–42 (MNDSVRTTTTISSTKSLVHSFQLSAILHLFLLISFTPMSAAA), serve as a signal peptide directing secretion. Residues 43 to 244 (DQHASHATRR…KRSAQTGNSE (202 aa)) constitute a propeptide that is removed on maturation. 3 N-linked (GlcNAc...) asparagine glycosylation sites follow: Asn110, Asn143, and Asn167. The tract at residues 231 to 259 (SVRRKRSAQTGNSERKNRKKGRKHHNTEA) is disordered. Basic residues predominate over residues 246–255 (KNRKKGRKHH). 3 cysteine pairs are disulfide-bonded: Cys264–Cys330, Cys293–Cys362, and Cys297–Cys364. Asn306 is a glycosylation site (N-linked (GlcNAc...) asparagine).

The protein belongs to the TGF-beta family. In terms of assembly, homodimer; disulfide-linked. Interacts with drag-1. Expressed in embryos just prior to hatching and remains constant in most cells throughout the larval and adult stages. Expressed by AVA command interneurons.

It is found in the secreted. Functionally, ligand for the serine/threonine-protein kinase receptor type-1 sma-6 which activates a TGF-beta-like signaling pathway. Multifunctional protein that is involved in body size, male ectodermal patterning, innate immunity, lipid metabolism and neural plasticity. Dose-dependent regulator of body size, probably influencing the sizes of some or all cells rather than their number. Plays a role in patterning of male-specific genital sensilla (simple sense organs), known as rays, and mating-associated structures, spicules. Plays a protective role in response to infection by the Gram-negative bacterium S.marcescens, by activating expression of genes involved in innate immunity. Regulator of lipid homeostasis, acting non cell-autonomously in the hypodermis; partly dependent on the Insulin/IGF-1-like signaling (IIS) mediated pathway. Required for aversive olfactory learning of pathogenic bacteria in adults. Involved in gland cell morphology, possibly via activation of a Smad-independent TGF-beta signaling pathway. Required to oppose the autoregulation of expression of Runt-related transcription factor rnt-1. This is Protein dbl-1 from Caenorhabditis elegans.